The following is a 421-amino-acid chain: Gamma-glutamyl phosphate reductase (421 aa).

The protein belongs to the gamma-glutamyl phosphate reductase family.

It localises to the cytoplasm. The catalysed reaction is L-glutamate 5-semialdehyde + phosphate + NADP(+) = L-glutamyl 5-phosphate + NADPH + H(+). It participates in amino-acid biosynthesis; L-proline biosynthesis; L-glutamate 5-semialdehyde from L-glutamate: step 2/2. Its function is as follows. Catalyzes the NADPH-dependent reduction of L-glutamate 5-phosphate into L-glutamate 5-semialdehyde and phosphate. The product spontaneously undergoes cyclization to form 1-pyrroline-5-carboxylate. The sequence is that of Gamma-glutamyl phosphate reductase from Pseudomonas aeruginosa (strain LESB58).